The following is an 845-amino-acid chain: SLIT and NTRK-like protein 2 (845 aa).

Positions 1-21 (MLSGVWFLSVLTVAGILQTES) are cleaved as a signal peptide. Residues 22 to 621 (RKTAKDICKI…LHTEVPLSVL (600 aa)) lie on the Extracellular side of the membrane. 2 disulfide bridges follow: cysteine 29–cysteine 35 and cysteine 33–cysteine 46. LRR repeat units lie at residues 63–84 (RIYQ…EFVN), 87–108 (NAVT…AFSG), 111–132 (TLKR…TFLG), 135–156 (SLEY…AFSK), 159–180 (KLKV…VFRF), and 182–203 (LLTH…GVLE). Residue asparagine 84 is glycosylated (N-linked (GlcNAc...) asparagine). Residues 167-215 (DNLLLSLPSNVFRFVLLTHLDLRGNRLKVMPFAGVLEHIGGIMEIQLEE) form a required for interaction with PTPRD region. The 50-residue stretch at 216–265 (NPWNCTCDLLPLKAWLDTITVFVGEIVCETPFRLHGKDVTQLTRQDLCPR) folds into the LRRCT 1 domain. Disulfide bonds link cysteine 220–cysteine 243 and cysteine 222–cysteine 263. Residues 263–321 (CPRKSASDSSQRGSHADTHVQRLSPTMNPALNPTRAPKASRPPKMRNRPTPRVTVSKDR) form a disordered region. The span at 283–293 (QRLSPTMNPAL) shows a compositional bias: polar residues. In terms of domain architecture, LRRNT spans 331 to 373 (QTKSPVPLTCPSSCVCTSQSSDNGLNVNCQERKFTNISDLQPK). LRR repeat units follow at residues 376–397 (SPKK…DLLE), 400–421 (SLDL…AFTN), 424–445 (SLRR…MFDG), 448–469 (SLQY…TFDA), 472–493 (NLQL…IFGG), and 495–516 (ALTR…GVLD). N-linked (GlcNAc...) asparagine glycosylation is present at asparagine 421. Positions 529 to 580 (NPWDCTCDIMGLKDWTEHANSPVIINEVTCESPAKHAGEILKFLGREAICPD) constitute an LRRCT 2 domain. A helical membrane pass occupies residues 622–642 (ILGLLVVFILSVCFGAGLFVF). The Cytoplasmic segment spans residues 643–845 (VLKRRKGVPS…LEKQTAISQL (203 aa)). A Phosphotyrosine modification is found at tyrosine 756.

The protein belongs to the SLITRK family. In terms of assembly, interacts with PTPRD; this interaction is PTPRD splicing-dependent and may induce pre-synaptic differentiation. Interacts with NTRK2. As to expression, expressed predominantly in the cerebral cortex of the brain but also at low levels in the spinal cord and medulla. Also expressed in some astrocytic brain tumors such as astrocytomas, oligodendrogliomas, glioblastomas, gangliogliomas and primitive neuroectodermal tumors.

It is found in the membrane. It localises to the cell membrane. Its subcellular location is the cell projection. The protein resides in the dendrite. Functionally, it is involved in synaptogenesis and promotes excitatory synapse differentiation. Suppresses neurite outgrowth. Involved in the negative regulation of NTRK2. The sequence is that of SLIT and NTRK-like protein 2 (SLITRK2) from Homo sapiens (Human).